A 424-amino-acid polypeptide reads, in one-letter code: Virion nicking-joining enzyme (424 aa).

PLD phosphodiesterase domains follow at residues 110–137 and 320–346; these read LGGV…DWRS and YSRV…TGNY.

Belongs to the orthopoxvirus OPG042 family.

Its subcellular location is the virion. In terms of biological role, DNA nicking enzyme that cleaves extruded cruciform DNA at its tip. Probably nicks viral hairpins. The chain is Virion nicking-joining enzyme (OPG042) from Homo sapiens (Human).